A 498-amino-acid chain; its full sequence is 3-octaprenyl-4-hydroxybenzoate carboxy-lyase (498 aa).

Residue Asn-176 coordinates Mn(2+). Prenylated FMN is bound by residues 179–181, 193–195, and 198–199; these read IYR, RWL, and RG. Mn(2+) is bound at residue Glu-242. The active-site Proton donor is Asp-291.

It belongs to the UbiD family. In terms of assembly, homohexamer. Prenylated FMN serves as cofactor. The cofactor is Mn(2+).

It is found in the cell membrane. The catalysed reaction is a 4-hydroxy-3-(all-trans-polyprenyl)benzoate + H(+) = a 2-(all-trans-polyprenyl)phenol + CO2. Its pathway is cofactor biosynthesis; ubiquinone biosynthesis. In terms of biological role, catalyzes the decarboxylation of 3-octaprenyl-4-hydroxy benzoate to 2-octaprenylphenol, an intermediate step in ubiquinone biosynthesis. The protein is 3-octaprenyl-4-hydroxybenzoate carboxy-lyase of Escherichia coli O6:K15:H31 (strain 536 / UPEC).